The following is a 201-amino-acid chain: Aminoglycoside N(6')-acetyltransferase type 1 (201 aa).

In terms of domain architecture, N-acetyltransferase spans 25-192 (VTLRLMTEHD…PAVYMVQTRQ (168 aa)). Substrate is bound by residues Trp-51 and Asp-154. Asn-159 contributes to the acetyl-CoA binding site.

Homodimer.

The enzyme catalyses kanamycin B + acetyl-CoA = N(6')-acetylkanamycin B + CoA + H(+). In terms of biological role, catalyzes the transfer of an acetyl group from acetyl-CoA to the 6'-amino group of aminoglycoside molecules conferring resistance to antibiotics containing the purpurosamine ring including amikacin. The polypeptide is Aminoglycoside N(6')-acetyltransferase type 1 (aacA4) (Klebsiella pneumoniae).